The following is a 554-amino-acid chain: Gamma-aminobutyric acid receptor subunit alpha-4 (554 aa).

Residues 1 to 35 (MVSAKKVPAIALSAGVSFALLRFLCLAVCLNESPG) form the signal peptide. Over 36–259 (QNQKEEKLCT…FHLRRKMGYF (224 aa)) the chain is Extracellular. Asn47 carries an N-linked (GlcNAc...) asparagine glycan. Arg100 lines the 4-aminobutanoate pocket. Asn144 and Asn157 each carry an N-linked (GlcNAc...) asparagine glycan. Thr163 is a 4-aminobutanoate binding site. Cysteines 172 and 186 form a disulfide. A helical membrane pass occupies residues 260-280 (MIQTYIPCIMTVILSQVSFWI). At 281-284 (NKES) the chain is on the cytoplasmic side. The helical transmembrane segment at 285–305 (VPARTVFGITTVLTMTTLSIS) threads the bilayer. Over 306 to 318 (ARHSLPKVSYATA) the chain is Extracellular. A helical membrane pass occupies residues 319–341 (MDWFIAVCFAFVFSALIEFAAVN). The Cytoplasmic portion of the chain corresponds to 342–517 (YFTNIQMEKA…PPPSGSGTSK (176 aa)). Disordered stretches follow at residues 350-381 (KAKR…QNTN), 397-435 (ESDV…SPNP), 452-471 (PSAS…ASVG), and 495-515 (ATGK…GSGT). The span at 410–422 (SSKSSTVVQESSK) shows a compositional bias: low complexity. The segment covering 502 to 511 (TPPPSAPPPS) has biased composition (pro residues). Residues 518 to 540 (IDKYARILFPVTFGAFNMVYWVV) form a helical membrane-spanning segment. The Extracellular segment spans residues 541–554 (YLSKDTMEKSESLM).

It belongs to the ligand-gated ion channel (TC 1.A.9) family. Gamma-aminobutyric acid receptor (TC 1.A.9.5) subfamily. GABRA4 sub-subfamily. In terms of assembly, heteropentamer, formed by a combination of alpha (GABRA1-6), beta (GABRB1-3), gamma (GABRG1-3), delta (GABRD), epsilon (GABRE), rho (GABRR1-3), pi (GABRP) and theta (GABRQ) chains, each subunit exhibiting distinct physiological and pharmacological properties. Expressed in the brain.

It localises to the cell membrane. The protein localises to the postsynaptic cell membrane. The catalysed reaction is chloride(in) = chloride(out). Potentiated by histamine. Alpha subunit of the heteropentameric ligand-gated chloride channel gated by gamma-aminobutyric acid (GABA), a major inhibitory neurotransmitter in the brain. GABA-gated chloride channels, also named GABA(A) receptors (GABAAR), consist of five subunits arranged around a central pore and contain GABA active binding site(s) located at the alpha and beta subunit interface(s). When activated by GABA, GABAARs selectively allow the flow of chloride anions across the cell membrane down their electrochemical gradient. GABAARs containing alpha-4 are predominantly extrasynaptic, contributing to tonic inhibition in dentate granule cells and thalamic relay neurons. Extrasynaptic alpha-4-containing GABAARs control levels of excitability and network activity. GABAAR containing alpha-4-beta-3-delta subunits can simultaneously bind GABA and histamine where histamine binds at the interface of two neighboring beta subunits, which may be involved in the regulation of sleep and wakefulness. The chain is Gamma-aminobutyric acid receptor subunit alpha-4 from Homo sapiens (Human).